We begin with the raw amino-acid sequence, 81 residues long: MSHTVKIYDTCIGCTQCVRACPTDVLEMAPWDGCKAGQVASAPRTEDCVGCKRCESACPTDFLSVRVYLGSETTRSMGLGY.

4Fe-4S ferredoxin-type domains follow at residues 2-31 (SHTV…MAPW) and 39-68 (VASA…VRVY). Residues cysteine 11, cysteine 14, cysteine 17, cysteine 21, cysteine 48, cysteine 51, cysteine 54, and cysteine 58 each contribute to the [4Fe-4S] cluster site.

The eukaryotic PSI reaction center is composed of at least 11 subunits. It depends on [4Fe-4S] cluster as a cofactor.

The protein resides in the plastid. Its subcellular location is the chloroplast thylakoid membrane. It catalyses the reaction reduced [plastocyanin] + hnu + oxidized [2Fe-2S]-[ferredoxin] = oxidized [plastocyanin] + reduced [2Fe-2S]-[ferredoxin]. In terms of biological role, apoprotein for the two 4Fe-4S centers FA and FB of photosystem I (PSI); essential for photochemical activity. FB is the terminal electron acceptor of PSI, donating electrons to ferredoxin. The C-terminus interacts with PsaA/B/D and helps assemble the protein into the PSI complex. Required for binding of PsaD and PsaE to PSI. PSI is a plastocyanin/cytochrome c6-ferredoxin oxidoreductase, converting photonic excitation into a charge separation, which transfers an electron from the donor P700 chlorophyll pair to the spectroscopically characterized acceptors A0, A1, FX, FA and FB in turn. This Tupiella akineta (Green alga) protein is Photosystem I iron-sulfur center.